Consider the following 402-residue polypeptide: Flavohemoprotein (402 aa).

A Globin domain is found at 1–136; sequence MLSEKTIEIV…IADAFISIEA (136 aa). Residue His-85 participates in heme b binding. Catalysis depends on charge relay system residues Tyr-95 and Glu-135. A reductase region spans residues 147–402; sequence GGWKDFRNFV…EFFGPAASLQ (256 aa). The 111-residue stretch at 150–260 folds into the FAD-binding FR-type domain; that stretch reads KDFRNFVVVK…SAPAGDFVLN (111 aa). FAD-binding positions include Tyr-188 and 204 to 207; that span reads RQYS. Residue 273 to 278 participates in NADP(+) binding; the sequence is GVGITP. 394–397 is a binding site for FAD; sequence FFGP.

This sequence belongs to the globin family. Two-domain flavohemoproteins subfamily. It in the C-terminal section; belongs to the flavoprotein pyridine nucleotide cytochrome reductase family. Heme b serves as cofactor. Requires FAD as cofactor.

The enzyme catalyses 2 nitric oxide + NADPH + 2 O2 = 2 nitrate + NADP(+) + H(+). The catalysed reaction is 2 nitric oxide + NADH + 2 O2 = 2 nitrate + NAD(+) + H(+). Its function is as follows. Is involved in NO detoxification in an aerobic process, termed nitric oxide dioxygenase (NOD) reaction that utilizes O(2) and NAD(P)H to convert NO to nitrate, which protects the bacterium from various noxious nitrogen compounds. Therefore, plays a central role in the inducible response to nitrosative stress. This is Flavohemoprotein from Bacillus thuringiensis subsp. konkukian (strain 97-27).